The primary structure comprises 164 residues: Transcription elongation factor GreA (164 aa).

It belongs to the GreA/GreB family.

Its function is as follows. Necessary for efficient RNA polymerase transcription elongation past template-encoded arresting sites. The arresting sites in DNA have the property of trapping a certain fraction of elongating RNA polymerases that pass through, resulting in locked ternary complexes. Cleavage of the nascent transcript by cleavage factors such as GreA or GreB allows the resumption of elongation from the new 3'terminus. GreA releases sequences of 2 to 3 nucleotides. In Helicobacter pylori (strain J99 / ATCC 700824) (Campylobacter pylori J99), this protein is Transcription elongation factor GreA.